Reading from the N-terminus, the 1562-residue chain is DNA-directed RNA polymerase subunit beta'' (1562 aa).

The tract at residues 1-22 is disordered; sequence MVKKKKFKTKNIQNPPFSSQNS. Over residues 11–22 the composition is skewed to polar residues; the sequence is NIQNPPFSSQNS. 4 residues coordinate Zn(2+): Cys-275, Cys-338, Cys-345, and Cys-348.

It belongs to the RNA polymerase beta' chain family. RpoC2 subfamily. In plastids the minimal PEP RNA polymerase catalytic core is composed of four subunits: alpha, beta, beta', and beta''. When a (nuclear-encoded) sigma factor is associated with the core the holoenzyme is formed, which can initiate transcription. It depends on Zn(2+) as a cofactor.

It is found in the plastid. The protein localises to the chloroplast. The catalysed reaction is RNA(n) + a ribonucleoside 5'-triphosphate = RNA(n+1) + diphosphate. DNA-dependent RNA polymerase catalyzes the transcription of DNA into RNA using the four ribonucleoside triphosphates as substrates. This is DNA-directed RNA polymerase subunit beta'' from Chlorella vulgaris (Green alga).